We begin with the raw amino-acid sequence, 96 residues long: Large ribosomal subunit protein uL23 (96 aa).

It belongs to the universal ribosomal protein uL23 family. As to quaternary structure, part of the 50S ribosomal subunit. Contacts protein L29, and trigger factor when it is bound to the ribosome.

In terms of biological role, one of the early assembly proteins it binds 23S rRNA. One of the proteins that surrounds the polypeptide exit tunnel on the outside of the ribosome. Forms the main docking site for trigger factor binding to the ribosome. The polypeptide is Large ribosomal subunit protein uL23 (Alkaliphilus oremlandii (strain OhILAs) (Clostridium oremlandii (strain OhILAs))).